The following is a 190-amino-acid chain: Protein shisa-like-2A (190 aa).

2 consecutive transmembrane segments (helical) span residues Ser48–Leu68 and Val70–Ile90.

This sequence belongs to the shisa family.

Its subcellular location is the membrane. This is Protein shisa-like-2A from Homo sapiens (Human).